The primary structure comprises 346 residues: tRNA N6-adenosine threonylcarbamoyltransferase (346 aa).

Positions 111 and 115 each coordinate Fe cation. Residues 134–138 (LVSGG), Asp167, Gly180, and Asn279 contribute to the substrate site. Position 307 (Asp307) interacts with Fe cation.

This sequence belongs to the KAE1 / TsaD family. The cofactor is Fe(2+).

Its subcellular location is the cytoplasm. It carries out the reaction L-threonylcarbamoyladenylate + adenosine(37) in tRNA = N(6)-L-threonylcarbamoyladenosine(37) in tRNA + AMP + H(+). Required for the formation of a threonylcarbamoyl group on adenosine at position 37 (t(6)A37) in tRNAs that read codons beginning with adenine. Is involved in the transfer of the threonylcarbamoyl moiety of threonylcarbamoyl-AMP (TC-AMP) to the N6 group of A37, together with TsaE and TsaB. TsaD likely plays a direct catalytic role in this reaction. This chain is tRNA N6-adenosine threonylcarbamoyltransferase, found in Burkholderia thailandensis (strain ATCC 700388 / DSM 13276 / CCUG 48851 / CIP 106301 / E264).